Consider the following 93-residue polypeptide: MGRSLKKGPFADEHLLKKVDAQKDQDKKPVIKTWSRRSTIFPSFIGCTIAVYDGRKHVPVYIQDDMVGHKLGEFVPTRTFRGHGGDDKKTSGK.

It belongs to the universal ribosomal protein uS19 family.

Protein S19 forms a complex with S13 that binds strongly to the 16S ribosomal RNA. The chain is Small ribosomal subunit protein uS19 from Pediococcus pentosaceus (strain ATCC 25745 / CCUG 21536 / LMG 10740 / 183-1w).